The sequence spans 362 residues: Peptide chain release factor 2 (362 aa).

Gln250 carries the N5-methylglutamine modification.

It belongs to the prokaryotic/mitochondrial release factor family. Methylated by PrmC. Methylation increases the termination efficiency of RF2.

It is found in the cytoplasm. Peptide chain release factor 2 directs the termination of translation in response to the peptide chain termination codons UGA and UAA. This is Peptide chain release factor 2 from Clostridium perfringens (strain ATCC 13124 / DSM 756 / JCM 1290 / NCIMB 6125 / NCTC 8237 / Type A).